The chain runs to 250 residues: Purine nucleoside phosphorylase BQ2027_MB2173C (250 aa).

Residues His-77, Cys-114, and His-131 each contribute to the Zn(2+) site.

This sequence belongs to the purine nucleoside phosphorylase YfiH/LACC1 family. Homodimer. Cu(2+) is required as a cofactor. It depends on Zn(2+) as a cofactor.

It catalyses the reaction adenosine + phosphate = alpha-D-ribose 1-phosphate + adenine. The enzyme catalyses S-methyl-5'-thioadenosine + phosphate = 5-(methylsulfanyl)-alpha-D-ribose 1-phosphate + adenine. It carries out the reaction inosine + phosphate = alpha-D-ribose 1-phosphate + hypoxanthine. The catalysed reaction is adenosine + H2O + H(+) = inosine + NH4(+). Its function is as follows. Purine nucleoside enzyme that catalyzes the phosphorolysis of adenosine and inosine nucleosides, yielding D-ribose 1-phosphate and the respective free bases, adenine and hypoxanthine. Also catalyzes the phosphorolysis of S-methyl-5'-thioadenosine into adenine and S-methyl-5-thio-alpha-D-ribose 1-phosphate. Also has adenosine deaminase activity. This Mycobacterium bovis (strain ATCC BAA-935 / AF2122/97) protein is Purine nucleoside phosphorylase BQ2027_MB2173C.